Here is a 551-residue protein sequence, read N- to C-terminus: Pyrroline-5-carboxylate reductase 1 (551 aa).

The disordered stretch occupies residues 279 to 551 (LYTQKQQNKK…RHEVKTEQIN (273 aa)). Low complexity-rich tracts occupy residues 282-298 (QKQQ…QQHQ), 306-342 (QQHQ…YGHQ), 383-415 (QQYQ…SNQR), 424-441 (KSPQ…QPSS), 448-475 (QQQQ…QQQP), 487-496 (QQQQPQQQQQ), and 503-520 (YNNN…NNYN). Positions 537–551 (YHDEKRHEVKTEQIN) are enriched in basic and acidic residues.

It belongs to the pyrroline-5-carboxylate reductase family. Homodecamer; composed of 5 homodimers.

It carries out the reaction L-proline + NADP(+) = (S)-1-pyrroline-5-carboxylate + NADPH + 2 H(+). It catalyses the reaction L-proline + NAD(+) = (S)-1-pyrroline-5-carboxylate + NADH + 2 H(+). The protein operates within amino-acid biosynthesis; L-proline biosynthesis; L-proline from L-glutamate 5-semialdehyde: step 1/1. In Dictyostelium discoideum (Social amoeba), this protein is Pyrroline-5-carboxylate reductase 1 (pycr1).